Consider the following 92-residue polypeptide: Small ribosomal subunit protein uS19 (92 aa).

It belongs to the universal ribosomal protein uS19 family.

Its function is as follows. Protein S19 forms a complex with S13 that binds strongly to the 16S ribosomal RNA. The protein is Small ribosomal subunit protein uS19 of Mesorhizobium japonicum (strain LMG 29417 / CECT 9101 / MAFF 303099) (Mesorhizobium loti (strain MAFF 303099)).